Here is a 141-residue protein sequence, read N- to C-terminus: Nucleoside diphosphate kinase (141 aa).

6 residues coordinate ATP: Lys-11, Phe-59, Arg-87, Thr-93, Arg-104, and Asn-114. Residue His-117 is the Pros-phosphohistidine intermediate of the active site.

Belongs to the NDK family. In terms of assembly, homotetramer. Mg(2+) is required as a cofactor.

It localises to the cytoplasm. The enzyme catalyses a 2'-deoxyribonucleoside 5'-diphosphate + ATP = a 2'-deoxyribonucleoside 5'-triphosphate + ADP. The catalysed reaction is a ribonucleoside 5'-diphosphate + ATP = a ribonucleoside 5'-triphosphate + ADP. Major role in the synthesis of nucleoside triphosphates other than ATP. The ATP gamma phosphate is transferred to the NDP beta phosphate via a ping-pong mechanism, using a phosphorylated active-site intermediate. The protein is Nucleoside diphosphate kinase of Acidithiobacillus ferrooxidans (strain ATCC 53993 / BNL-5-31) (Leptospirillum ferrooxidans (ATCC 53993)).